Consider the following 115-residue polypeptide: Nucleoid-associated protein Npun_F0448 (115 aa).

Belongs to the YbaB/EbfC family. In terms of assembly, homodimer.

The protein resides in the cytoplasm. It localises to the nucleoid. In terms of biological role, binds to DNA and alters its conformation. May be involved in regulation of gene expression, nucleoid organization and DNA protection. The chain is Nucleoid-associated protein Npun_F0448 from Nostoc punctiforme (strain ATCC 29133 / PCC 73102).